A 141-amino-acid chain; its full sequence is 3-hydroxyacyl-[acyl-carrier-protein] dehydratase FabZ (141 aa).

His49 is a catalytic residue.

It belongs to the thioester dehydratase family. FabZ subfamily.

The protein localises to the cytoplasm. The catalysed reaction is a (3R)-hydroxyacyl-[ACP] = a (2E)-enoyl-[ACP] + H2O. Involved in unsaturated fatty acids biosynthesis. Catalyzes the dehydration of short chain beta-hydroxyacyl-ACPs and long chain saturated and unsaturated beta-hydroxyacyl-ACPs. The protein is 3-hydroxyacyl-[acyl-carrier-protein] dehydratase FabZ of Fusobacterium nucleatum subsp. nucleatum (strain ATCC 25586 / DSM 15643 / BCRC 10681 / CIP 101130 / JCM 8532 / KCTC 2640 / LMG 13131 / VPI 4355).